A 344-amino-acid polypeptide reads, in one-letter code: Dihydroorotase (344 aa).

Zn(2+) contacts are provided by histidine 14 and histidine 16. Residues 16 to 18 and asparagine 42 contribute to the substrate site; that span reads HLR. Positions 100, 137, and 175 each coordinate Zn(2+). The residue at position 100 (lysine 100) is an N6-carboxylysine. Histidine 137 provides a ligand contact to substrate. Residue leucine 220 coordinates substrate. Residue aspartate 248 coordinates Zn(2+). The active site involves aspartate 248. The substrate site is built by histidine 252 and alanine 264.

This sequence belongs to the metallo-dependent hydrolases superfamily. DHOase family. Class II DHOase subfamily. As to quaternary structure, homodimer. Zn(2+) serves as cofactor.

It carries out the reaction (S)-dihydroorotate + H2O = N-carbamoyl-L-aspartate + H(+). Its pathway is pyrimidine metabolism; UMP biosynthesis via de novo pathway; (S)-dihydroorotate from bicarbonate: step 3/3. Functionally, catalyzes the reversible cyclization of carbamoyl aspartate to dihydroorotate. The protein is Dihydroorotase of Ralstonia nicotianae (strain ATCC BAA-1114 / GMI1000) (Ralstonia solanacearum).